Reading from the N-terminus, the 590-residue chain is DNA mismatch repair protein MutL (590 aa).

The segment covering 335-351 (PLSSASPKLPESTTATA) has biased composition (polar residues). A disordered region spans residues 335 to 354 (PLSSASPKLPESTTATAQPH).

The protein belongs to the DNA mismatch repair MutL/HexB family.

Functionally, this protein is involved in the repair of mismatches in DNA. It is required for dam-dependent methyl-directed DNA mismatch repair. May act as a 'molecular matchmaker', a protein that promotes the formation of a stable complex between two or more DNA-binding proteins in an ATP-dependent manner without itself being part of a final effector complex. The sequence is that of DNA mismatch repair protein MutL from Dichelobacter nodosus (strain VCS1703A).